Here is a 275-residue protein sequence, read N- to C-terminus: Bis(5'-nucleosyl)-tetraphosphatase, symmetrical (275 aa).

The protein belongs to the Ap4A hydrolase family.

The catalysed reaction is P(1),P(4)-bis(5'-adenosyl) tetraphosphate + H2O = 2 ADP + 2 H(+). Its function is as follows. Hydrolyzes diadenosine 5',5'''-P1,P4-tetraphosphate to yield ADP. The chain is Bis(5'-nucleosyl)-tetraphosphatase, symmetrical from Stutzerimonas stutzeri (strain A1501) (Pseudomonas stutzeri).